A 609-amino-acid chain; its full sequence is NADH-ubiquinone oxidoreductase chain 5 (609 aa).

The next 16 membrane-spanning stretches (helical) occupy residues 3-23, 46-66, 90-110, 115-135, 140-160, 174-194, 216-236, 244-264, 276-296, 304-323, 328-350, 368-388, 410-432, 460-480, 485-505, and 585-605; these read VINL…LPIV, AFMI…EMII, MIFV…SMWY, PFIN…MILV, LFQL…LIGW, AVLY…WFLI, LMGL…HPWL, TPVS…FLLI, MQTT…ICAL, IIAF…IGIN, AFLH…GSII, VLPF…GMPF, WALL…IMFF, LLLG…PTST, MPYY…ILAL, and GLIK…LMMI.

The protein belongs to the complex I subunit 5 family.

The protein localises to the mitochondrion inner membrane. The catalysed reaction is a ubiquinone + NADH + 5 H(+)(in) = a ubiquinol + NAD(+) + 4 H(+)(out). Functionally, core subunit of the mitochondrial membrane respiratory chain NADH dehydrogenase (Complex I) that is believed to belong to the minimal assembly required for catalysis. Complex I functions in the transfer of electrons from NADH to the respiratory chain. The immediate electron acceptor for the enzyme is believed to be ubiquinone. This is NADH-ubiquinone oxidoreductase chain 5 (MT-ND5) from Phoca vitulina (Harbor seal).